The following is a 496-amino-acid chain: GTPase Der (496 aa).

2 EngA-type G domains span residues 3–166 (PVIA…VGKF) and 209–382 (VKLA…TCAT). GTP-binding positions include 9-16 (GRPNVGKS), 56-60 (DTGGI), 118-121 (NKTD), 215-222 (GRPNVGKS), 262-266 (DTAGV), and 327-330 (NKWD). The region spanning 383-467 (RRVGTSMLTR…PIRIQFKEGE (85 aa)) is the KH-like domain.

Belongs to the TRAFAC class TrmE-Era-EngA-EngB-Septin-like GTPase superfamily. EngA (Der) GTPase family. As to quaternary structure, associates with the 50S ribosomal subunit.

In terms of biological role, GTPase that plays an essential role in the late steps of ribosome biogenesis. This is GTPase Der from Proteus mirabilis (strain HI4320).